The chain runs to 85 residues: Large ribosomal subunit protein bL27 (85 aa).

A disordered region spans residues 1 to 27 (MAHKKAGGSTKNGRDSQSKRLGVKRYG).

The protein belongs to the bacterial ribosomal protein bL27 family.

The protein is Large ribosomal subunit protein bL27 of Halorhodospira halophila (strain DSM 244 / SL1) (Ectothiorhodospira halophila (strain DSM 244 / SL1)).